We begin with the raw amino-acid sequence, 90 residues long: Lectin-1 (90 aa).

Q1 bears the Pyrrolidone carboxylic acid mark. C46 and C71 are joined by a disulfide.

The N-terminus is blocked. Post-translationally, contains seven disulfide bonds. In terms of processing, proteolytically cleaved. Major mature form may consist of cleaved, disulfide-bonded N-terminal and C-terminal chains.

Lectin with specificity for complex N-linked glycans and O-linked glycans. Has hemagglutinating activity towards rabbit erythrocytes. In Hypnea musciformis (Red alga), this protein is Lectin-1.